The chain runs to 337 residues: Receptor like protein kinase S.3 (337 aa).

The region spanning 50 to 316 (FKESELFGTE…VNYLEGNDVL (267 aa)) is the Protein kinase domain. Residues 56–64 (FGTEANGTV) and Lys-78 contribute to the ATP site. Phosphotyrosine is present on Tyr-123. Asp-171 (proton acceptor) is an active-site residue.

The protein belongs to the protein kinase superfamily. Ser/Thr protein kinase family.

It catalyses the reaction L-seryl-[protein] + ATP = O-phospho-L-seryl-[protein] + ADP + H(+). The enzyme catalyses L-threonyl-[protein] + ATP = O-phospho-L-threonyl-[protein] + ADP + H(+). This Arabidopsis thaliana (Mouse-ear cress) protein is Receptor like protein kinase S.3 (LECRKS3).